A 265-amino-acid polypeptide reads, in one-letter code: Phosphonates import ATP-binding protein PhnC 1 (265 aa).

The ABC transporter domain maps to 7–252 (IEVSNLSKSF…KLNEIYGTAA (246 aa)). 39-46 (GASGSGKS) serves as a coordination point for ATP.

It belongs to the ABC transporter superfamily. Phosphonates importer (TC 3.A.1.9.1) family. In terms of assembly, the complex is composed of two ATP-binding proteins (PhnC), two transmembrane proteins (PhnE) and a solute-binding protein (PhnD).

It localises to the cell inner membrane. The catalysed reaction is phosphonate(out) + ATP + H2O = phosphonate(in) + ADP + phosphate + H(+). In terms of biological role, part of the ABC transporter complex PhnCDE involved in phosphonates import. Responsible for energy coupling to the transport system. In Nostoc sp. (strain PCC 7120 / SAG 25.82 / UTEX 2576), this protein is Phosphonates import ATP-binding protein PhnC 1.